We begin with the raw amino-acid sequence, 374 residues long: S-adenosylmethionine:tRNA ribosyltransferase-isomerase (374 aa).

It belongs to the QueA family. As to quaternary structure, monomer.

It localises to the cytoplasm. It catalyses the reaction 7-aminomethyl-7-carbaguanosine(34) in tRNA + S-adenosyl-L-methionine = epoxyqueuosine(34) in tRNA + adenine + L-methionine + 2 H(+). It participates in tRNA modification; tRNA-queuosine biosynthesis. Functionally, transfers and isomerizes the ribose moiety from AdoMet to the 7-aminomethyl group of 7-deazaguanine (preQ1-tRNA) to give epoxyqueuosine (oQ-tRNA). The chain is S-adenosylmethionine:tRNA ribosyltransferase-isomerase from Prochlorococcus marinus (strain MIT 9215).